Here is a 285-residue protein sequence, read N- to C-terminus: RNA 5'-monophosphate methyltransferase (285 aa).

Residues R46, N77, D111, 136–137 (DI), and M165 each bind S-adenosyl-L-methionine. A Bin3-type SAM domain is found at 53 to 275 (ELLRQLFPPE…KHTHETQAIP (223 aa)).

It belongs to the methyltransferase superfamily. In terms of assembly, interacts with DICER1; the interaction may be mediated by RNA.

The protein resides in the cytoplasm. It carries out the reaction a 5'-end 5'-phospho-ribonucleoside-RNA + S-adenosyl-L-methionine = a 5'-end (5'-methylphospho)-ribonucleoside-RNA + S-adenosyl-L-homocysteine. The enzyme catalyses a 5'-end 5'-phospho-ribonucleoside-RNA + 2 S-adenosyl-L-methionine = a 5'-end (5'-bismethylphospho)-ribonucleoside-RNA + 2 S-adenosyl-L-homocysteine. O-methyltransferase that specifically monomethylates 5'-monophosphate of cytoplasmic histidyl tRNA (tRNA(His)), acting as a capping enzyme by protecting tRNA(His) from cleavage by DICER1. Also able, with less efficiently, to methylate the 5' monophosphate of a subset of pre-miRNAs, acting as a negative regulator of miRNA processing. The 5' monophosphate of pre-miRNAs is recognized by DICER1 and is required for pre-miRNAs processing: methylation at this position reduces the processing of pre-miRNAs by DICER1. Was also reported to mediate dimethylation of pre-miR-145; however dimethylation cannot be reproduced by another group which observes a monomethylation of pre-miR-145. The chain is RNA 5'-monophosphate methyltransferase from Mus musculus (Mouse).